A 129-amino-acid chain; its full sequence is MPSLCIIALFGTLTFYTLIPSIHTLKCVRCDGPMSNYDCKTTYPAAEECPSLSGGSSNYCSKKETFTSNGNLEQTRRYCNSVAAPSTACTDLKTGGKLCEYSCNTDGCNSVAGMEPTRAVYFIAILMLA.

The first 24 residues, 1–24 (MPSLCIIALFGTLTFYTLIPSIHT), serve as a signal peptide directing secretion. Positions 25-46 (LKCVRCDGPMSNYDCKTTYPAA) are excised as a propeptide.

This sequence belongs to the scoloptoxin-05 family. Post-translationally, contains 3 disulfide bonds. In terms of tissue distribution, expressed by the venom gland.

The protein resides in the secreted. Toxin that increase voltage-gated calcium channel (Cav) currents in DRG neurons by 70% and 120%, when 1 uM and 10 uM are tested, respectively. This Scolopendra mutilans (Chinese red-headed centipede) protein is Omega-scoloptoxin(05)-Ssm1a.